A 314-amino-acid polypeptide reads, in one-letter code: MNFSVGLGRDDAEKRLVQNGVSRRDFMKFCATVAAAMGMGPAFAPKVAEALTAKHRPSVVWLHNAECTGCTEAAIRTIKPYIDALILDTISLDYQETIMAAAGEAAEAALHQALEGKDGYYLVVEGGLPTIDGGQWGMVAGHPMIETTKKAAAKAKGIICIGTCSAYGGVQKAKPNPSQAKGVSEALGVKTINIPGCPPNPINFVGAVVHVLTKGIPDLDENGRPKLFYGELVHDNCPRLPHFEASEFAPSFDSEEAKKGFCLYELGCKGPVTYNNCPKVLFNQVNWPVQAGHPCLGCSEPDFWDTMTPFYEQG.

The segment at residues 1–49 (MNFSVGLGRDDAEKRLVQNGVSRRDFMKFCATVAAAMGMGPAFAPKVAE) is a signal peptide (tat-type signal). [4Fe-4S] cluster contacts are provided by C67, C70, C164, C197, H234, C237, C262, and C268. [3Fe-4S] cluster-binding residues include C277, C295, and C298.

Belongs to the [NiFe]/[NiFeSe] hydrogenase small subunit family. In terms of assembly, heterodimer of a large and a small subunit. It depends on [4Fe-4S] cluster as a cofactor. [3Fe-4S] cluster serves as cofactor. Post-translationally, predicted to be exported by the Tat system. The position of the signal peptide cleavage has been experimentally proven.

The protein localises to the periplasm. It carries out the reaction 2 Fe(III)-[cytochrome c3] + H2 = 2 Fe(II)-[cytochrome c3] + 2 H(+). Functionally, involved in hydrogen uptake for the anaerobic reduction of sulfate to hydrogen sulfide in an electron transport chain. Cytochrome c3 is the physiological electron acceptor. The polypeptide is Periplasmic [NiFe] hydrogenase small subunit (hydA) (Solidesulfovibrio fructosivorans (Desulfovibrio fructosivorans)).